The sequence spans 218 residues: MFEGPLQDLIDELSRLPGVGPKSAQRIAFHLLNVDPTDITRLQEALGGVRDGVQFCRICCNISREEVCRICSDSGRDGGTICVVEEPKDIQVIERTGEFSGRYHVLGGALDPLANIGPRELNISTLLQRIGGVLPDRELADSTPENKLFDATPTVREVILATDPNTEGEATASYLGRLLKDFPDLVVSRLASGMPLGGDLEFVDELTLSRALSGRLQI.

Residues 56–71 (CRICCNISREEVCRIC) form a C4-type zinc finger. A Toprim domain is found at 79 to 195 (GTICVVEEPK…VVSRLASGMP (117 aa)).

It belongs to the RecR family.

Its function is as follows. May play a role in DNA repair. It seems to be involved in an RecBC-independent recombinational process of DNA repair. It may act with RecF and RecO. The polypeptide is Recombination protein RecR (Corynebacterium glutamicum (strain R)).